The sequence spans 1050 residues: ATP-dependent DNA helicase MPH1 (1050 aa).

Positions 95–262 (IVQRAFYHNL…EIIDNLNISK (168 aa)) constitute a Helicase ATP-binding domain. An ATP-binding site is contributed by 108–115 (LPTGLGKT). The short motif at 210-213 (DEAH) is the DEAH box element. The Helicase C-terminal domain maps to 431–631 (KIEAMMEELD…LIDLKEQNRM (201 aa)). Disordered stretches follow at residues 493–524 (DESN…AQIN) and 743–821 (DSDE…PPKR). Residues 499-508 (KKSKGKRVGK) are compositionally biased toward basic residues. The span at 786 to 799 (RTLDQHHSASEERG) shows a compositional bias: basic and acidic residues. The span at 800–810 (INSNFSHESNL) shows a compositional bias: polar residues.

It belongs to the DEAD box helicase family. DEAH subfamily. FANCM sub-subfamily. Interacts with the MHF histone-fold complex to form the FANCM-MHF complex.

It localises to the nucleus. The enzyme catalyses ATP + H2O = ADP + phosphate + H(+). Functionally, ATP-dependent DNA helicase involved in DNA damage repair by homologous recombination and in genome maintenance. Capable of unwinding D-loops. Plays a role in limiting crossover recombinants during mitotic DNA double-strand break (DSB) repair. Component of a FANCM-MHF complex which promotes gene conversion at blocked replication forks, probably by reversal of the stalled fork. In Scheffersomyces stipitis (strain ATCC 58785 / CBS 6054 / NBRC 10063 / NRRL Y-11545) (Yeast), this protein is ATP-dependent DNA helicase MPH1.